Consider the following 705-residue polypeptide: UvrABC system protein C (705 aa).

The region spanning 16-95 is the GIY-YIG domain; sequence ETPGVYRFRD…IKQFDPRFNV (80 aa). A UVR domain is found at 208–243; that stretch reads GRYLRRLEREMQQAAQAQEYERAARLRDDIGALRRA. The span at 315–332 shows a compositional bias: low complexity; that stretch reads AASTGTAGSTVPTTTAGS. Disordered regions lie at residues 315-335 and 683-705; these read AAST…SQGE and RADA…ETVS.

It belongs to the UvrC family. Interacts with UvrB in an incision complex.

The protein localises to the cytoplasm. The UvrABC repair system catalyzes the recognition and processing of DNA lesions. UvrC both incises the 5' and 3' sides of the lesion. The N-terminal half is responsible for the 3' incision and the C-terminal half is responsible for the 5' incision. The chain is UvrABC system protein C from Frankia casuarinae (strain DSM 45818 / CECT 9043 / HFP020203 / CcI3).